Consider the following 701-residue polypeptide: MPREVPLERIRNIGIIAHIDAGKTTTTERILFYTGRTYKLGEVHEGTAVMDWMEQERERGITITAAATTAEWTVEGTPYRINIIDTPGHVDFTAEVERSLRVLDGGVVVFDAVAGVEPQSETVWRQADKYHVPRICFVNKMDRIGANFMRTVDMIRERLGAKPVPVQFPIGAEDRFRGIVDLITNKAVIYVDDQGKREELEAIPADVADEVERLRNEMIEAIAETDDELTLLYLEGEELSVEELRRALRKATIQGKLVPVLCGAALRNKGVQRLLDAVVYYLPSPVDIPPVRGTRPGQIAGDDGVEMITRPTSEDAPFTGLVFKIVSDPFVGKLAYFRVYSGKLETGSYVLNSTRNQRERIGRLLQMHANHREEIKEVYAGDIAAMVGPKQSYTGDTICDPNDPIVLESIRFPEPVIQLAIEPKTKADQDKLAVALGKLAEEDPTFRVFTDPETGQTIIAGMGELHLEVIVDRMRREYKVEANQGKPQVAYRESITVPADVDSKFVRQSGGKGQYGHVKLQVEPLERGKGFEFVNGIVGGVIPREYIPAVEAGVKEAMASGVIAGYPVVDIKVTLYDGSYHEVDSSEMAFKIAASMGLKEAVRKGRPILLEPVMKVEIVTPEDFLGAVLGDINSRRGHVEGMEARGNAQVIRAYVPLASMFGYTTDLRSATQGRATSSMEFAYYQPLPDALAKEIIEKRRG.

Residues 8 to 286 form the tr-type G domain; sequence ERIRNIGIIA…AVVYYLPSPV (279 aa). GTP-binding positions include 17–24, 85–89, and 139–142; these read AHIDAGKT, DTPGH, and NKMD.

The protein belongs to the TRAFAC class translation factor GTPase superfamily. Classic translation factor GTPase family. EF-G/EF-2 subfamily.

It localises to the cytoplasm. In terms of biological role, catalyzes the GTP-dependent ribosomal translocation step during translation elongation. During this step, the ribosome changes from the pre-translocational (PRE) to the post-translocational (POST) state as the newly formed A-site-bound peptidyl-tRNA and P-site-bound deacylated tRNA move to the P and E sites, respectively. Catalyzes the coordinated movement of the two tRNA molecules, the mRNA and conformational changes in the ribosome. This Roseiflexus castenholzii (strain DSM 13941 / HLO8) protein is Elongation factor G.